Consider the following 260-residue polypeptide: 4-hydroxy-tetrahydrodipicolinate reductase (260 aa).

NAD(+) contacts are provided by residues 12–17, 92–94, and 118–121; these read GFRGKM, GTT, and APNF. His-148 serves as the catalytic Proton donor/acceptor. His-149 is a (S)-2,3,4,5-tetrahydrodipicolinate binding site. Lys-152 (proton donor) is an active-site residue. 158–159 lines the (S)-2,3,4,5-tetrahydrodipicolinate pocket; that stretch reads GT.

The protein belongs to the DapB family.

Its subcellular location is the cytoplasm. The enzyme catalyses (S)-2,3,4,5-tetrahydrodipicolinate + NAD(+) + H2O = (2S,4S)-4-hydroxy-2,3,4,5-tetrahydrodipicolinate + NADH + H(+). It carries out the reaction (S)-2,3,4,5-tetrahydrodipicolinate + NADP(+) + H2O = (2S,4S)-4-hydroxy-2,3,4,5-tetrahydrodipicolinate + NADPH + H(+). Its pathway is amino-acid biosynthesis; L-lysine biosynthesis via DAP pathway; (S)-tetrahydrodipicolinate from L-aspartate: step 4/4. Catalyzes the conversion of 4-hydroxy-tetrahydrodipicolinate (HTPA) to tetrahydrodipicolinate. The chain is 4-hydroxy-tetrahydrodipicolinate reductase from Lactococcus lactis subsp. cremoris (strain SK11).